A 763-amino-acid chain; its full sequence is 1,4-alpha-glucan branching enzyme GlgB (763 aa).

The Nucleophile role is filled by Asp437. The active-site Proton donor is Glu488.

This sequence belongs to the glycosyl hydrolase 13 family. GlgB subfamily. As to quaternary structure, monomer.

The enzyme catalyses Transfers a segment of a (1-&gt;4)-alpha-D-glucan chain to a primary hydroxy group in a similar glucan chain.. It functions in the pathway glycan biosynthesis; glycogen biosynthesis. In terms of biological role, catalyzes the formation of the alpha-1,6-glucosidic linkages in glycogen by scission of a 1,4-alpha-linked oligosaccharide from growing alpha-1,4-glucan chains and the subsequent attachment of the oligosaccharide to the alpha-1,6 position. In Synechococcus sp. (strain JA-2-3B'a(2-13)) (Cyanobacteria bacterium Yellowstone B-Prime), this protein is 1,4-alpha-glucan branching enzyme GlgB.